Consider the following 234-residue polypeptide: Uridylate kinase (234 aa).

9–12 (KLSG) serves as a coordination point for ATP. Gly51 is a UMP binding site. The ATP site is built by Gly52 and Arg56. Residues Asp71 and 132–139 (CGNPFFTT) each bind UMP. The ATP site is built by Thr159, Tyr165, and Asp168.

It belongs to the UMP kinase family. In terms of assembly, homohexamer.

It is found in the cytoplasm. It carries out the reaction UMP + ATP = UDP + ADP. It functions in the pathway pyrimidine metabolism; CTP biosynthesis via de novo pathway; UDP from UMP (UMPK route): step 1/1. With respect to regulation, inhibited by UTP. Its function is as follows. Catalyzes the reversible phosphorylation of UMP to UDP. This Prochlorococcus marinus (strain MIT 9215) protein is Uridylate kinase.